Consider the following 140-residue polypeptide: Cytochrome c-type biogenesis protein CcmE (140 aa).

At 1-7 (MKRKHKR) the chain is on the cytoplasmic side. The helical; Signal-anchor for type II membrane protein transmembrane segment at 8–28 (LLFVLASFCAAGCALLFILSE) threads the bilayer. The Periplasmic portion of the chain corresponds to 29 to 140 (LRESVSFFYT…TIPKALPEPK (112 aa)). 2 residues coordinate heme: H121 and Y125.

The protein belongs to the CcmE/CycJ family.

It localises to the cell inner membrane. Its function is as follows. Heme chaperone required for the biogenesis of c-type cytochromes. Transiently binds heme delivered by CcmC and transfers the heme to apo-cytochromes in a process facilitated by CcmF and CcmH. In Anaplasma marginale (strain Florida), this protein is Cytochrome c-type biogenesis protein CcmE.